The primary structure comprises 514 residues: Probable cysteine protease ATG4 (514 aa).

Over residues 1 to 15 (MAREDASVPRSHDSA) the composition is skewed to basic and acidic residues. Disordered regions lie at residues 1 to 28 (MARE…EIPV) and 61 to 84 (DSSD…DSAQ). Residue Cys166 is the Nucleophile of the active site. Residues Asp336 and His338 contribute to the active site. Residues 461-514 (ATPSAEDTVPVSTLSASESEITTSSYETPTSKDDNSSRASLDVVVLDTTGEQQE) are disordered. A compositionally biased stretch (low complexity) spans 472 to 489 (STLSASESEITTSSYETP).

This sequence belongs to the peptidase C54 family.

Its subcellular location is the cytoplasm. It is found in the nucleus. It localises to the preautophagosomal structure. The enzyme catalyses [protein]-C-terminal L-amino acid-glycyl-phosphatidylethanolamide + H2O = [protein]-C-terminal L-amino acid-glycine + a 1,2-diacyl-sn-glycero-3-phosphoethanolamine. Functionally, cysteine protease that plays a key role in cytoplasm to vacuole transport (Cvt) and autophagy by mediating both proteolytic activation and delipidation of ATG8. Required for selective autophagic degradation of the nucleus (nucleophagy) as well as for mitophagy which contributes to regulate mitochondrial quantity and quality by eliminating the mitochondria to a basal level to fulfill cellular energy requirements and preventing excess ROS production. The protease activity is required for proteolytic activation of ATG8: cleaves the C-terminal amino acid of ATG8 to reveal a C-terminal glycine. ATG8 ubiquitin-like activity requires the exposure of the glycine at the C-terminus for its conjugation to phosphatidylethanolamine (PE) and its insertion to membranes, which is necessary for autophagy. The ATG8-PE conjugate mediates tethering between adjacent membranes and stimulates membrane hemifusion, leading to expansion of the autophagosomal membrane during autophagy. In addition to the protease activity, also catalyzes deconjugation of PE-conjugated forms of ATG8 during macroautophagy: ATG8 delipidation is required to release the protein from membranes, which facilitates multiple events during macroautophagy, and especially for efficient autophagosome biogenesis, the assembly of ATG9-containing tubulovesicular clusters into phagophores/autophagosomes, and for the disassembly of PAS-associated ATG components. ATG8 delipidation by ATG4 also recycles ATG8-PE generated on inappropriate membranes to maintain a reservoir of unlipidated ATG8 that is required for autophagosome formation at the PAS. The protein is Probable cysteine protease ATG4 (ATG4) of Scheffersomyces stipitis (strain ATCC 58785 / CBS 6054 / NBRC 10063 / NRRL Y-11545) (Yeast).